We begin with the raw amino-acid sequence, 239 residues long: Skn-1 dependent zygotic transcript 1 protein (239 aa).

May have a role in mesendoderm development during embryogenesis. This is Skn-1 dependent zygotic transcript 1 protein from Caenorhabditis briggsae.